A 418-amino-acid polypeptide reads, in one-letter code: Voltage-gated ClC-type chloride channel ClcB (418 aa).

Helical transmembrane passes span 5-25 (LLIA…FRHA), 54-74 (LLTP…WQKF), 146-166 (LWIA…PLAG), 168-188 (LFIA…PVII), 222-242 (ALII…LTLM), 260-280 (LALG…VWGN), 291-311 (APPL…AVLA), 316-336 (GAPG…GMLY), 352-372 (LLLG…APIM), and 380-400 (MTGE…ASVI).

Belongs to the chloride channel (TC 2.A.49) family. ClcB subfamily.

The protein resides in the cell inner membrane. Its function is as follows. Probably acts as an electrical shunt for an outwardly-directed proton pump that is linked to amino acid decarboxylation, as part of the extreme acid resistance (XAR) response. This is Voltage-gated ClC-type chloride channel ClcB from Escherichia coli O9:H4 (strain HS).